The following is a 155-amino-acid chain: uncharacterized protein (155 aa).

Positions 1-23 are cleaved as a signal peptide; the sequence is MTILSLSRFMLAGVLLASFNASA.

The protein to E.coli YfjT.

This is an uncharacterized protein from Escherichia coli (strain K12).